Reading from the N-terminus, the 246-residue chain is Carboxy-S-adenosyl-L-methionine synthase (246 aa).

Residues Tyr-39, 64 to 66, 89 to 90, 117 to 118, Asn-132, and Arg-199 each bind S-adenosyl-L-methionine; these read GCS, DN, and DI.

The protein belongs to the class I-like SAM-binding methyltransferase superfamily. Cx-SAM synthase family. In terms of assembly, homodimer.

It catalyses the reaction prephenate + S-adenosyl-L-methionine = carboxy-S-adenosyl-L-methionine + 3-phenylpyruvate + H2O. Functionally, catalyzes the conversion of S-adenosyl-L-methionine (SAM) to carboxy-S-adenosyl-L-methionine (Cx-SAM). The chain is Carboxy-S-adenosyl-L-methionine synthase from Erwinia tasmaniensis (strain DSM 17950 / CFBP 7177 / CIP 109463 / NCPPB 4357 / Et1/99).